Here is a 189-residue protein sequence, read N- to C-terminus: Adenylate kinase (189 aa).

10-15 (AAGKGT) contacts ATP. The tract at residues 30-59 (STGDMLRAAIASGSELGQKVKGVLDRGELV) is NMP. AMP contacts are provided by residues Thr31, Arg36, 57–59 (ELV), 85–88 (GFPR), and Gln92. The segment at 126 to 136 (KRFAEQGRPDD) is LID. Arg127 contributes to the ATP binding site. AMP contacts are provided by Arg133 and Arg144. Ala172 provides a ligand contact to ATP.

The protein belongs to the adenylate kinase family. Monomer.

It is found in the cytoplasm. The enzyme catalyses AMP + ATP = 2 ADP. The protein operates within purine metabolism; AMP biosynthesis via salvage pathway; AMP from ADP: step 1/1. In terms of biological role, catalyzes the reversible transfer of the terminal phosphate group between ATP and AMP. Plays an important role in cellular energy homeostasis and in adenine nucleotide metabolism. The polypeptide is Adenylate kinase (Caulobacter sp. (strain K31)).